A 90-amino-acid polypeptide reads, in one-letter code: DNA-directed RNA polymerase subunit omega (90 aa).

This sequence belongs to the RNA polymerase subunit omega family. The RNAP catalytic core consists of 2 alpha, 1 beta, 1 beta' and 1 omega subunit. When a sigma factor is associated with the core the holoenzyme is formed, which can initiate transcription.

It catalyses the reaction RNA(n) + a ribonucleoside 5'-triphosphate = RNA(n+1) + diphosphate. Functionally, promotes RNA polymerase assembly. Latches the N- and C-terminal regions of the beta' subunit thereby facilitating its interaction with the beta and alpha subunits. Required for kasugamycin production and aerial mycelium formation in S.kasugaensis and responsible for pleiotropy. The polypeptide is DNA-directed RNA polymerase subunit omega (rpoZ) (Streptomyces kasugaensis).